The chain runs to 237 residues: Cysteine-rich venom protein DIS1 (237 aa).

An N-terminal signal peptide occupies residues 1–18 (MFVFILLSLAAVLQQSFG). The 129-residue stretch at 37–165 (VDKHNAFRRS…SYNYFYVCQY (129 aa)) folds into the SCP domain. 7 disulfide bridges follow: Cys-74–Cys-152, Cys-91–Cys-166, Cys-147–Cys-163, Cys-185–Cys-192, Cys-188–Cys-197, Cys-201–Cys-234, and Cys-219–Cys-232. One can recognise a ShKT domain in the interval 201 to 234 (CSREDVFMNCKSLVAQSNCQDDYIRKNCPATCFC).

It belongs to the CRISP family. In terms of tissue distribution, expressed by the venom gland.

It localises to the secreted. Its function is as follows. Weakly blocks contraction of smooth muscle elicited by high potassium-induced depolarization, but does not block caffeine-stimulated contraction. May target voltage-gated calcium channels on smooth muscle. The sequence is that of Cysteine-rich venom protein DIS1 from Dispholidus typus (Boomslang).